A 265-amino-acid polypeptide reads, in one-letter code: Speedy protein E13 (265 aa).

A disordered region spans residues 1–80; it reads MGQILGKIMM…EPEKELAPEP (80 aa). Over residues 66–80 the composition is skewed to acidic residues; the sequence is DESDDEPEKELAPEP.

This sequence belongs to the Speedy/Ringo family.

The sequence is that of Speedy protein E13 from Homo sapiens (Human).